A 751-amino-acid chain; its full sequence is MFKKTVPLLSAVAIAISFSAGTGVANAQENASYEVNSPEPKSNDFWWPNKLNLEPLRQHSPESDPYGDDFDYAEAFSQLDLEQVKKDIEELMTSDQDWWPADYGHYGPFFIRMAWHGAGTYRVQDGRGGAAGAQQRFEPLNSWPDNVSLDKARRLLWPVKQKYGRDISWADLMVLTGNVALESMGFETFGFAGGREDAWEPDIVYWGPEKEWLKGDERYSGDRELENPLAAVQMGLIYVNPEGPNGKPDPLLAAKDIRDTFGRMAMNDEETVALIAGGHTFGKAHGAHKPEECLGAEPAAAGVEEQGLGWKNKCGKGNAEDTITSGLEGAWSVNPTAWTTQYLDNLFGFEWEQTKSPAGAIQWIPVDGQASNLVPDAHVEGKRHAPIMFTTDLSLKEDPEYRKIAKRFHEDPKEFELAFAKAWFKLTHRDMGPKQSYLGDMAPQEDLLWQDPIPAVDFELINENDVEQLKVAILDSGLSVPQLVRTAWASASSFRGTDMRGGANGARIALEPQMNWEANNPAELKKVLDTLKGVQEDFNDELSGDKYVSLADVIVLGGAAAIEKAGKDAGYDVTVPFEPGRTDASQEMTDVNSFSFLEPKADAFRNYYAEGNRVSPAQHMVDKADQLTLTVPEMTVLVGGLRSLDANYNDSDHGVFTDQPGTLNNDFFVNLLSMDNEWKKSSDNEAIYEGFDRKTGEQKYTATTVDLIFGSNSELRAVAEVYAMSDADEKFVNDFVQAWTKVMQLDRFDLK.

Positions 1 to 27 (MFKKTVPLLSAVAIAISFSAGTGVANA) are cleaved as a signal peptide. A cross-link (tryptophyl-tyrosyl-methioninium (Trp-Tyr) (with M-264)) is located at residues 115–238 (WHGAGTYRVQ…LAAVQMGLIY (124 aa)). H116 (proton acceptor) is an active-site residue. The segment at residues 238 to 264 (YVNPEGPNGKPDPLLAAKDIRDTFGRM) is a cross-link (tryptophyl-tyrosyl-methioninium (Tyr-Met) (with W-115)). H279 contributes to the heme b binding site.

This sequence belongs to the peroxidase family. Peroxidase/catalase subfamily. Homodimer or homotetramer. Heme b is required as a cofactor. In terms of processing, formation of the three residue Trp-Tyr-Met cross-link is important for the catalase, but not the peroxidase activity of the enzyme.

It carries out the reaction H2O2 + AH2 = A + 2 H2O. It catalyses the reaction 2 H2O2 = O2 + 2 H2O. Functionally, bifunctional enzyme with both catalase and broad-spectrum peroxidase activity. The sequence is that of Catalase-peroxidase 2 from Idiomarina loihiensis (strain ATCC BAA-735 / DSM 15497 / L2-TR).